A 348-amino-acid polypeptide reads, in one-letter code: Ion-translocating oxidoreductase complex subunit D (348 aa).

Transmembrane regions (helical) follow at residues 20 to 39, 67 to 87, and 124 to 144; these read VMRL…CYLF, YVVS…LIAV, and AMVG…NWMA. Thr187 is modified (FMN phosphoryl threonine). 4 helical membrane passes run 221–241, 244–264, 266–286, and 300–320; these read WINL…LIPW, PVAM…LAPA, FAMP…FFII, and LVFG…GGYP.

Belongs to the NqrB/RnfD family. The complex is composed of six subunits: RnfA, RnfB, RnfC, RnfD, RnfE and RnfG. The cofactor is FMN.

The protein resides in the cell inner membrane. Functionally, part of a membrane-bound complex that couples electron transfer with translocation of ions across the membrane. In Tolumonas auensis (strain DSM 9187 / NBRC 110442 / TA 4), this protein is Ion-translocating oxidoreductase complex subunit D.